The primary structure comprises 288 residues: Probable endonuclease 4 (288 aa).

Zn(2+)-binding residues include H75, H115, E153, D187, H190, H224, D237, H239, and E269.

This sequence belongs to the AP endonuclease 2 family. Requires Zn(2+) as cofactor.

The catalysed reaction is Endonucleolytic cleavage to 5'-phosphooligonucleotide end-products.. Its function is as follows. Endonuclease IV plays a role in DNA repair. It cleaves phosphodiester bonds at apurinic or apyrimidinic (AP) sites, generating a 3'-hydroxyl group and a 5'-terminal sugar phosphate. This Chlamydia trachomatis serovar L2 (strain ATCC VR-902B / DSM 19102 / 434/Bu) protein is Probable endonuclease 4.